A 440-amino-acid polypeptide reads, in one-letter code: MTIQQKVPTVGFVSLGCPKASSDAERILTKLRAEGYEISPSYDNSDLVIVNTCGFIDAAVEESLDAIGEALNENGKVIVTGCLGAKGDIVQTTHPAVLAVTGPHAADEVMGIVHTHLPKPHDPYSDLVPPQGVRLTPDHFAYLKISEGCNHSCTFCIIPSLRGPLVSRPVGDVLAEAENLARAGVKEILVISQDTSAYGVDLKYRTAFWGGKPVKSRLKELCEALASLGIWVRLHYVYPYPSVDDVIPLMAEGKILPYLDVPFQHASPKILKAMKRPASAENTLERIAKWREICPEIVIRSTFITGFPGETEEDFDQLIQFLEDAKLDRVGAFAYSPVDGAKANELGELLPEDVREDRRRWLMQVQEDISADKLAAKIDTVIQVLVDEVDEEGTIARSKADAPEIDGLVYLDGHFDAQPGDFLQVKVIDADHHDLYAQVV.

The MTTase N-terminal domain occupies 8-118; it reads PTVGFVSLGC…VMGIVHTHLP (111 aa). [4Fe-4S] cluster contacts are provided by Cys-17, Cys-53, Cys-82, Cys-149, Cys-153, and Cys-156. The Radical SAM core domain occupies 135 to 372; that stretch reads LTPDHFAYLK…MQVQEDISAD (238 aa). The TRAM domain maps to 375 to 440; sequence AAKIDTVIQV…DHHDLYAQVV (66 aa).

Belongs to the methylthiotransferase family. RimO subfamily. The cofactor is [4Fe-4S] cluster.

It localises to the cytoplasm. The catalysed reaction is L-aspartate(89)-[ribosomal protein uS12]-hydrogen + (sulfur carrier)-SH + AH2 + 2 S-adenosyl-L-methionine = 3-methylsulfanyl-L-aspartate(89)-[ribosomal protein uS12]-hydrogen + (sulfur carrier)-H + 5'-deoxyadenosine + L-methionine + A + S-adenosyl-L-homocysteine + 2 H(+). In terms of biological role, catalyzes the methylthiolation of an aspartic acid residue of ribosomal protein uS12. This is Ribosomal protein uS12 methylthiotransferase RimO from Dechloromonas aromatica (strain RCB).